The chain runs to 122 residues: Ribosome-binding factor A (122 aa).

It belongs to the RbfA family. Monomer. Binds 30S ribosomal subunits, but not 50S ribosomal subunits or 70S ribosomes.

It localises to the cytoplasm. Functionally, one of several proteins that assist in the late maturation steps of the functional core of the 30S ribosomal subunit. Associates with free 30S ribosomal subunits (but not with 30S subunits that are part of 70S ribosomes or polysomes). Required for efficient processing of 16S rRNA. May interact with the 5'-terminal helix region of 16S rRNA. This chain is Ribosome-binding factor A, found in Pelobacter propionicus (strain DSM 2379 / NBRC 103807 / OttBd1).